We begin with the raw amino-acid sequence, 592 residues long: Monocopper oxidase-like protein SKS2 (592 aa).

Positions 1–23 (MAATDFFFAFVFSFALIFGFSFA) are cleaved as a signal peptide. N-linked (GlcNAc...) asparagine glycans are attached at residues N61, N110, N172, N203, N259, N280, N295, N344, N364, N433, and N447. H455 contributes to the Cu cation binding site. 2 N-linked (GlcNAc...) asparagine glycosylation sites follow: N476 and N536. A lipid anchor (GPI-anchor amidated serine) is attached at S564. A propeptide spans 565-592 (ATKSMTNGQLILIFSMMMVLLSSFSSFC) (removed in mature form).

It belongs to the multicopper oxidase family. Cu cation serves as cofactor.

It localises to the cell membrane. In Arabidopsis thaliana (Mouse-ear cress), this protein is Monocopper oxidase-like protein SKS2 (SKS2).